The following is a 76-amino-acid chain: Cyclin-dependent kinases regulatory subunit (76 aa).

The protein belongs to the CKS family. Forms a homohexamer that can probably bind six kinase subunits.

Functionally, binds to the catalytic subunit of the cyclin dependent kinases and is essential for their biological function. This is Cyclin-dependent kinases regulatory subunit from Patella vulgata (Common limpet).